Here is a 64-residue protein sequence, read N- to C-terminus: Alpha-mammal toxin AnCra1 (64 aa).

An LCN-type CS-alpha/beta domain is found at 2 to 64; the sequence is KDGYIVDDVN…VRTKGPGRCN (63 aa). 4 cysteine pairs are disulfide-bonded: cysteine 12–cysteine 63, cysteine 16–cysteine 36, cysteine 22–cysteine 46, and cysteine 26–cysteine 48.

The protein belongs to the long (4 C-C) scorpion toxin superfamily. Sodium channel inhibitor family. Alpha subfamily. As to expression, expressed by the venom gland.

Its subcellular location is the secreted. Alpha toxins bind voltage-independently at site-3 of sodium channels (Nav) and inhibit the inactivation of the activated channels, thereby blocking neuronal transmission. This toxin is active against mammals. The recombinant toxin selectively inhibits the fast inactivation of hNav1.7/SCN9A channel (EC(50)=136.7 nM). Is potent in inhibiting the fast inactivation of hNav1.7 and has little effect on the steady-state inactivation. In vivo, intravenous injection into mice induces muscle contraction, leading to severe paralysis and death. The polypeptide is Alpha-mammal toxin AnCra1 (Androctonus crassicauda (Arabian fat-tailed scorpion)).